The following is a 443-amino-acid chain: MHVTVEDQSTIKKVLHVEIPVEVVSRELNAGFDQIRKTAKIKGFRPGKAPMSMLKRLYKDQVHADVSIQLIQSSLPNAIREKALNIIGDPQINPSVLSEEGPFTYSATIEIKPEIDDIDFKGLTLKKPLYACTDEEVDHQLTLLRKNLAKLQDIAEPRPAQEKDAAIIDYQARLDGQPVADLPDEQEFHLRIGSGAIDKTFDQQVVGMTVGETRTFEVTFPETHGSKTLAGNTISFTVTLKSLKEEILPELNDELAAQFGPFDSLDQLKTEIRKNLQSGYDRRGEQELHEQVFTALLEKTSFEVPETMVQHELDGILDEIDRTYSAYNLSLEALGQTKEALSEKYRDTAVKQAKRHLILNKIIDQEKMAISDDELAEGFESIAKSMGQPADMVKQYYQGNPEQIDVLRYTLLEKKAMRIIIEGSTVEEVTPDPSSPDTAGDQA.

The PPIase FKBP-type domain maps to 163 to 249 (KDAAIIDYQA…LKSLKEEILP (87 aa)).

The protein belongs to the FKBP-type PPIase family. Tig subfamily.

The protein resides in the cytoplasm. It catalyses the reaction [protein]-peptidylproline (omega=180) = [protein]-peptidylproline (omega=0). Involved in protein export. Acts as a chaperone by maintaining the newly synthesized protein in an open conformation. Functions as a peptidyl-prolyl cis-trans isomerase. The protein is Trigger factor of Desulfosudis oleivorans (strain DSM 6200 / JCM 39069 / Hxd3) (Desulfococcus oleovorans).